The primary structure comprises 122 residues: Large ribosomal subunit protein uL18 (122 aa).

It belongs to the universal ribosomal protein uL18 family. Part of the 50S ribosomal subunit; part of the 5S rRNA/L5/L18/L25 subcomplex. Contacts the 5S and 23S rRNAs.

This is one of the proteins that bind and probably mediate the attachment of the 5S RNA into the large ribosomal subunit, where it forms part of the central protuberance. This Thermotoga neapolitana (strain ATCC 49049 / DSM 4359 / NBRC 107923 / NS-E) protein is Large ribosomal subunit protein uL18.